We begin with the raw amino-acid sequence, 444 residues long: Phosphoglucosamine mutase (444 aa).

Catalysis depends on S102, which acts as the Phosphoserine intermediate. Mg(2+)-binding residues include S102, D241, D243, and D245. S102 is subject to Phosphoserine.

This sequence belongs to the phosphohexose mutase family. Requires Mg(2+) as cofactor. In terms of processing, activated by phosphorylation.

It carries out the reaction alpha-D-glucosamine 1-phosphate = D-glucosamine 6-phosphate. Catalyzes the conversion of glucosamine-6-phosphate to glucosamine-1-phosphate. This Actinobacillus succinogenes (strain ATCC 55618 / DSM 22257 / CCUG 43843 / 130Z) protein is Phosphoglucosamine mutase.